A 295-amino-acid chain; its full sequence is Phosphatidylserine decarboxylase proenzyme (295 aa).

Catalysis depends on charge relay system; for autoendoproteolytic cleavage activity residues Asp-113, His-169, and Ser-256. The active-site Schiff-base intermediate with substrate; via pyruvic acid; for decarboxylase activity is Ser-256. Ser-256 bears the Pyruvic acid (Ser); by autocatalysis mark.

This sequence belongs to the phosphatidylserine decarboxylase family. PSD-B subfamily. Prokaryotic type II sub-subfamily. Heterodimer of a large membrane-associated beta subunit and a small pyruvoyl-containing alpha subunit. Requires pyruvate as cofactor. In terms of processing, is synthesized initially as an inactive proenzyme. Formation of the active enzyme involves a self-maturation process in which the active site pyruvoyl group is generated from an internal serine residue via an autocatalytic post-translational modification. Two non-identical subunits are generated from the proenzyme in this reaction, and the pyruvate is formed at the N-terminus of the alpha chain, which is derived from the carboxyl end of the proenzyme. The autoendoproteolytic cleavage occurs by a canonical serine protease mechanism, in which the side chain hydroxyl group of the serine supplies its oxygen atom to form the C-terminus of the beta chain, while the remainder of the serine residue undergoes an oxidative deamination to produce ammonia and the pyruvoyl prosthetic group on the alpha chain. During this reaction, the Ser that is part of the protease active site of the proenzyme becomes the pyruvoyl prosthetic group, which constitutes an essential element of the active site of the mature decarboxylase.

The protein localises to the cell membrane. It carries out the reaction a 1,2-diacyl-sn-glycero-3-phospho-L-serine + H(+) = a 1,2-diacyl-sn-glycero-3-phosphoethanolamine + CO2. The protein operates within phospholipid metabolism; phosphatidylethanolamine biosynthesis; phosphatidylethanolamine from CDP-diacylglycerol: step 2/2. Catalyzes the formation of phosphatidylethanolamine (PtdEtn) from phosphatidylserine (PtdSer). This chain is Phosphatidylserine decarboxylase proenzyme, found in Clostridium botulinum (strain ATCC 19397 / Type A).